The sequence spans 318 residues: MTSPENVRRVACVGAGVIGGGWVAHFLARGYEVTAWDPAPDAEPRLRRLVEAAWPTLTRLGLAEGASTDRLTVTDTLEQAVADAEFVQESAPEKLDLKRDLLARLDAATPPGVVIASSTSGYPMTDMQTTAADPSRLVVGHPFNPPYLIPLVEVVGGERTAAAAVAWASRFYEVAGKSVITMDNEVPGFIANRLQEALWREALHMVASGEATVRDIDLSITEGPGLRWAVMGPMLTFALAGGEGGMAHMLDHFGPSLKSPWTRLAAPELDKELYDAVVAGCDEAADGRSIADLVAERDRGVVEVLRATGRLGPEEDSR.

NAD(+) is bound at residue 14-19 (GAGVIG).

It belongs to the 3-hydroxyacyl-CoA dehydrogenase family. L-carnitine dehydrogenase subfamily. As to quaternary structure, homodimer.

The protein localises to the cytoplasm. It catalyses the reaction carnitine + NAD(+) = 3-dehydrocarnitine + NADH + H(+). The protein operates within amine and polyamine metabolism; carnitine metabolism. Functionally, catalyzes the NAD(+)-dependent oxidation of L-carnitine to 3-dehydrocarnitine. In Streptomyces coelicolor (strain ATCC BAA-471 / A3(2) / M145), this protein is L-carnitine dehydrogenase.